A 306-amino-acid chain; its full sequence is Homoserine O-acetyltransferase (306 aa).

Cys142 (acyl-thioester intermediate) is an active-site residue. Positions 163 and 192 each coordinate substrate. His235 acts as the Proton acceptor in catalysis. Residue Glu237 is part of the active site. Arg249 contacts substrate.

Belongs to the MetA family.

It localises to the cytoplasm. It carries out the reaction L-homoserine + acetyl-CoA = O-acetyl-L-homoserine + CoA. Its pathway is amino-acid biosynthesis; L-methionine biosynthesis via de novo pathway; O-acetyl-L-homoserine from L-homoserine: step 1/1. Functionally, transfers an acetyl group from acetyl-CoA to L-homoserine, forming acetyl-L-homoserine. This Clostridium botulinum (strain Eklund 17B / Type B) protein is Homoserine O-acetyltransferase.